A 212-amino-acid chain; its full sequence is Thymidylate kinase (212 aa).

Residue 10-17 (GLEGAGKT) coordinates ATP.

It belongs to the thymidylate kinase family.

It carries out the reaction dTMP + ATP = dTDP + ADP. In terms of biological role, phosphorylation of dTMP to form dTDP in both de novo and salvage pathways of dTTP synthesis. The sequence is that of Thymidylate kinase from Serratia proteamaculans (strain 568).